A 525-amino-acid polypeptide reads, in one-letter code: Anti-silencing protein 2 (525 aa).

The disordered stretch occupies residues 467–525 (LPRVPTDSPQLPSKDKSQETAKKDDRPKLVANEPVTLDTSTPPVAQSLADSKHCSGLHK). A compositionally biased stretch (basic and acidic residues) spans 479-494 (SKDKSQETAKKDDRPK).

Derepression of silent mating type loci when overexpressed. In Saccharomyces cerevisiae (strain ATCC 204508 / S288c) (Baker's yeast), this protein is Anti-silencing protein 2 (ASF2).